The chain runs to 429 residues: C4-dicarboxylate transport protein (429 aa).

8 helical membrane passes run 9–29, 45–65, 79–99, 149–169, 185–205, 223–243, 308–328, and 356–376; these read VLYV…HYYP, LIKM…IAGM, LLYF…ATHI, GEIL…AHLG, VLFG…FGAM, LIGT…GAIA, IYMT…LTWM, and AATL…ILGI.

Belongs to the dicarboxylate/amino acid:cation symporter (DAACS) (TC 2.A.23) family.

It localises to the cell inner membrane. Responsible for the transport of dicarboxylates such as succinate, fumarate, and malate from the periplasm across the membrane. The protein is C4-dicarboxylate transport protein of Burkholderia multivorans (strain ATCC 17616 / 249).